We begin with the raw amino-acid sequence, 490 residues long: Cytochrome P450 2C38 (490 aa).

The signal sequence occupies residues 1–20 (MDLVTFLVLTLSSLILLSLW). Cys435 contributes to the heme binding site.

This sequence belongs to the cytochrome P450 family. It depends on heme as a cofactor. Liver, brain, kidney, and intestine, with trace amounts in lung and heart.

Its subcellular location is the endoplasmic reticulum membrane. The protein resides in the microsome membrane. It catalyses the reaction an organic molecule + reduced [NADPH--hemoprotein reductase] + O2 = an alcohol + oxidized [NADPH--hemoprotein reductase] + H2O + H(+). The enzyme catalyses (5Z,8Z,11Z,14Z)-eicosatetraenoate + reduced [NADPH--hemoprotein reductase] + O2 = 11,12-epoxy-(5Z,8Z,14Z)-eicosatrienoate + oxidized [NADPH--hemoprotein reductase] + H2O + H(+). The protein operates within lipid metabolism; arachidonate metabolism. Its function is as follows. A cytochrome P450 monooxygenase that primarily catalyzes the epoxidation of 11,12 double bond of (5Z,8Z,11Z,14Z)-eicosatetraenoic acid (arachidonate) forming 11,12-epoxyeicosatrienoic acid (11,12-EET) regioisomer. Mechanistically, uses molecular oxygen inserting one oxygen atom into a substrate, and reducing the second into a water molecule, with two electrons provided by NADPH via cytochrome P450 reductase (CPR; NADPH--hemoprotein reductase). The chain is Cytochrome P450 2C38 from Mus musculus (Mouse).